We begin with the raw amino-acid sequence, 874 residues long: Alanine--tRNA ligase (874 aa).

4 residues coordinate Zn(2+): H564, H568, C665, and H669.

Belongs to the class-II aminoacyl-tRNA synthetase family. The cofactor is Zn(2+).

Its subcellular location is the cytoplasm. It carries out the reaction tRNA(Ala) + L-alanine + ATP = L-alanyl-tRNA(Ala) + AMP + diphosphate. In terms of biological role, catalyzes the attachment of alanine to tRNA(Ala) in a two-step reaction: alanine is first activated by ATP to form Ala-AMP and then transferred to the acceptor end of tRNA(Ala). Also edits incorrectly charged Ser-tRNA(Ala) and Gly-tRNA(Ala) via its editing domain. This chain is Alanine--tRNA ligase, found in Delftia acidovorans (strain DSM 14801 / SPH-1).